The chain runs to 221 residues: Protein myomaker (221 aa).

Topologically, residues 1–3 (MGT) are extracellular. Residues 4-24 (VVAKLLLPTLSSLAFLPTVSI) form a helical membrane-spanning segment. Residues 25–29 (ATKRR) lie on the Cytoplasmic side of the membrane. The chain crosses the membrane as a helical span at residues 30 to 50 (FYMEAMVYLFTMFFVAFSHAC). The Extracellular segment spans residues 51–64 (DGPGLSVLCFMRRD). The helical transmembrane segment at 65 to 85 (ILEYFSIYGTALSMWVSLMAL) threads the bilayer. The Cytoplasmic portion of the chain corresponds to 86–93 (ADFDEPQR). A helical transmembrane segment spans residues 94–110 (STFTMLGVLTIAVRTFH). Residues 111 to 113 (DRW) are Extracellular-facing. A helical transmembrane segment spans residues 114 to 134 (GYGVYSGPIGTATLIIAVKWL). At 135–153 (KKMKEKKGLYPDKSIYTQQ) the chain is on the cytoplasmic side. A helical membrane pass occupies residues 154 to 174 (IGPGLCFGALALMLRFFFEEW). Position 175 (Asp175) is a topological domain, extracellular. Residues 176–196 (YTYVHSFYHCALAMSFVLLLP) traverse the membrane as a helical segment. Topologically, residues 197 to 221 (KVNKKAGNAGAPAKLTFSTLCCTCV) are cytoplasmic. S-palmitoyl cysteine attachment occurs at residues Cys217 and Cys218.

This sequence belongs to the TMEM8 family. As to quaternary structure, interacts with MYMX. Post-translationally, palmitoylated at the C-terminus; palmitoylation promotes localization to the Golgi apparatus. In terms of tissue distribution, specifically expressed in skeletal muscle during embryogenesis and adult muscle regeneration.

Its subcellular location is the cell membrane. It localises to the golgi apparatus membrane. Its function is as follows. Myoblast-specific protein that mediates myoblast fusion, an essential step for the formation of multi-nucleated muscle fibers. Actively participates in the membrane fusion reaction by mediating the mixing of cell membrane lipids (hemifusion) upstream of MYMX. Acts independently of MYMX. Involved in skeletal muscle regeneration in response to injury by mediating the fusion of satellite cells, a population of muscle stem cells, with injured myofibers. Also involved in skeletal muscle hypertrophy, probably by mediating the fusion of satellite cells with myofibers. This chain is Protein myomaker, found in Mus musculus (Mouse).